A 213-amino-acid chain; its full sequence is UPF0319 protein HAPS_0727 (213 aa).

The signal sequence occupies residues Met-1–Ala-21.

The protein belongs to the UPF0319 family.

The chain is UPF0319 protein HAPS_0727 from Glaesserella parasuis serovar 5 (strain SH0165) (Haemophilus parasuis).